The following is a 507-amino-acid chain: ATP synthase subunit alpha, chloroplastic (507 aa).

170–177 (GDRQTGKT) provides a ligand contact to ATP.

Belongs to the ATPase alpha/beta chains family. F-type ATPases have 2 components, CF(1) - the catalytic core - and CF(0) - the membrane proton channel. CF(1) has five subunits: alpha(3), beta(3), gamma(1), delta(1), epsilon(1). CF(0) has four main subunits: a, b, b' and c.

It is found in the plastid. It localises to the chloroplast thylakoid membrane. It catalyses the reaction ATP + H2O + 4 H(+)(in) = ADP + phosphate + 5 H(+)(out). In terms of biological role, produces ATP from ADP in the presence of a proton gradient across the membrane. The alpha chain is a regulatory subunit. The polypeptide is ATP synthase subunit alpha, chloroplastic (Panax ginseng (Korean ginseng)).